Reading from the N-terminus, the 271-residue chain is Ribosomal RNA small subunit methyltransferase J (271 aa).

S-adenosyl-L-methionine-binding positions include 116–117 (RD), 132–133 (ER), 168–169 (SS), and Asp-190.

Belongs to the methyltransferase superfamily. RsmJ family.

The protein resides in the cytoplasm. It carries out the reaction guanosine(1516) in 16S rRNA + S-adenosyl-L-methionine = N(2)-methylguanosine(1516) in 16S rRNA + S-adenosyl-L-homocysteine + H(+). Functionally, specifically methylates the guanosine in position 1516 of 16S rRNA. This Shewanella piezotolerans (strain WP3 / JCM 13877) protein is Ribosomal RNA small subunit methyltransferase J.